A 2328-amino-acid chain; its full sequence is Reducing polyketide synthase Preu2 (2328 aa).

The region spanning Met-1 to Ser-259 is the Ketosynthase family 3 (KS3) domain. A malonyl-CoA:ACP transacylase (MAT) domain region spans residues Ile-376 to Ser-696. Residues Asn-766 to Asp-899 form an N-terminal hotdog fold region. The tract at residues Asn-766–Thr-1057 is dehydratase (DH) domain. The PKS/mFAS DH domain occupies Asn-766–Glu-1059. His-798 serves as the catalytic Proton acceptor; for dehydratase activity. Positions Leu-914–Glu-1059 are C-terminal hotdog fold. Residue Asp-969 is the Proton donor; for dehydratase activity of the active site. Residues Asp-1198–Asp-1419 form a methyltransferase (MT) domain region. Residues Cys-1932–Val-2111 form a ketoreductase (KR)domain region. One can recognise a Carrier domain in the interval Ser-2231–Leu-2309. Position 2269 is an O-(pantetheine 4'-phosphoryl)serine (Ser-2269).

Pantetheine 4'-phosphate is required as a cofactor.

In terms of biological role, reducing polyketide synthase; part of a gene cluster that mediates the biosynthesis of a yet unidentified natural product. The chain is Reducing polyketide synthase Preu2 from Preussia isomera (Coprophilous fungus).